A 679-amino-acid polypeptide reads, in one-letter code: Single-strand DNA endonuclease ASTE1 (679 aa).

Positions 351–400 are interaction with SHLD2; the sequence is TILPTQVENMQQPNAHRISQPIRQIIYGLLLNASPHLDKTSWNALPPQPL. Residues 625–645 form a disordered region; the sequence is RSNSKKKRQKKQNTSCSKNRG. Over residues 626-635 the composition is skewed to basic residues; that stretch reads SNSKKKRQKK.

The protein belongs to the asteroid family. As to quaternary structure, interacts with SHLD1, SHLD2, SHLD3, RIF1 and MAD2L2/REV7.

Its function is as follows. Structure-specific DNA endonuclease that specifically cleaves single-stranded DNA and 3' overhang DNA. Contributes to the control of DNA double-strand break repair choice by antagonizing BRCA1-dependent homologous recombination (HR) and promoting non-homologous end-joining (NHEJ). Recruited to the single-stranded DNA ends by SHLD2 and cleaves the 3' exposed DNA ends, therefore inhibiting DNA end resection (necessary for HR) and promoting DNA end protection (necessary for NHEJ). This chain is Single-strand DNA endonuclease ASTE1 (ASTE1), found in Homo sapiens (Human).